A 572-amino-acid polypeptide reads, in one-letter code: Proline--tRNA ligase (572 aa).

It belongs to the class-II aminoacyl-tRNA synthetase family. ProS type 1 subfamily. Homodimer.

It is found in the cytoplasm. The enzyme catalyses tRNA(Pro) + L-proline + ATP = L-prolyl-tRNA(Pro) + AMP + diphosphate. Its function is as follows. Catalyzes the attachment of proline to tRNA(Pro) in a two-step reaction: proline is first activated by ATP to form Pro-AMP and then transferred to the acceptor end of tRNA(Pro). As ProRS can inadvertently accommodate and process non-cognate amino acids such as alanine and cysteine, to avoid such errors it has two additional distinct editing activities against alanine. One activity is designated as 'pretransfer' editing and involves the tRNA(Pro)-independent hydrolysis of activated Ala-AMP. The other activity is designated 'posttransfer' editing and involves deacylation of mischarged Ala-tRNA(Pro). The misacylated Cys-tRNA(Pro) is not edited by ProRS. This Citrobacter koseri (strain ATCC BAA-895 / CDC 4225-83 / SGSC4696) protein is Proline--tRNA ligase.